We begin with the raw amino-acid sequence, 551 residues long: MFS efflux transporter aclA (551 aa).

Helical transmembrane passes span 26–46, 64–84, 93–113, 125–145, 154–174, 181–201, 220–240, and 251–271; these read WAVFVSLCFASFVASLDITAI, VWIANSYTLASAVVQPLIGQI, PMIILMCLFALGSGICGGATS, GLGAGGILLLLEVIVCDLVPL, IALSTCALGISLGPLVGGALV, WVFYINLPCAGVALVALVLCL, WVGNTIFIAAICAIMYALVIG, and VLVPLVLGAFGWVLFHIFEAS. Asn286 carries N-linked (GlcNAc...) asparagine glycosylation. Transmembrane regions (helical) follow at residues 294 to 314, 327 to 347, 356 to 376, 385 to 405, 420 to 440, and 492 to 512; these read VLAFLAAMLMQWVVYFLTLFF, VDVIPFTGFMIPSAIVGGAIM, LHWAGFALLSICMGVFSTWDA, ILQCLVGLGHGLLLTSVLPAI, AYAFLRSFGFVWGVEIPAVVF, and LRTVWQVGMAFALLGFALVVV.

It belongs to the major facilitator superfamily.

The protein localises to the membrane. Its function is as follows. MFS efflux transporter; part of the gene cluster that mediates the biosynthesis of aspirochlorine (or antibiotic A30641), an unusual halogenated spiro compound with distinctive antifungal properties due to selective inhibition of protein biosynthesis, and which is also active against bacteria, viruses, and murine tumor cells. The sequence is that of MFS efflux transporter aclA from Aspergillus oryzae (strain ATCC 42149 / RIB 40) (Yellow koji mold).